We begin with the raw amino-acid sequence, 284 residues long: Nucleotide-binding protein PputGB1_0956 (284 aa).

An ATP-binding site is contributed by 8–15 (GRSGSGKS). 60–63 (DARN) contributes to the GTP binding site.

It belongs to the RapZ-like family.

Its function is as follows. Displays ATPase and GTPase activities. The chain is Nucleotide-binding protein PputGB1_0956 from Pseudomonas putida (strain GB-1).